Here is a 256-residue protein sequence, read N- to C-terminus: Imidazole glycerol phosphate synthase subunit HisF (256 aa).

Residues Asp-11 and Asp-130 contribute to the active site.

The protein belongs to the HisA/HisF family. Heterodimer of HisH and HisF.

The protein localises to the cytoplasm. It catalyses the reaction 5-[(5-phospho-1-deoxy-D-ribulos-1-ylimino)methylamino]-1-(5-phospho-beta-D-ribosyl)imidazole-4-carboxamide + L-glutamine = D-erythro-1-(imidazol-4-yl)glycerol 3-phosphate + 5-amino-1-(5-phospho-beta-D-ribosyl)imidazole-4-carboxamide + L-glutamate + H(+). It participates in amino-acid biosynthesis; L-histidine biosynthesis; L-histidine from 5-phospho-alpha-D-ribose 1-diphosphate: step 5/9. Functionally, IGPS catalyzes the conversion of PRFAR and glutamine to IGP, AICAR and glutamate. The HisF subunit catalyzes the cyclization activity that produces IGP and AICAR from PRFAR using the ammonia provided by the HisH subunit. The protein is Imidazole glycerol phosphate synthase subunit HisF of Cupriavidus metallidurans (strain ATCC 43123 / DSM 2839 / NBRC 102507 / CH34) (Ralstonia metallidurans).